We begin with the raw amino-acid sequence, 191 residues long: HTH-type transcriptional regulator SAR0097 (191 aa).

The 63-residue stretch at 12–74 folds into the HTH tetR-type domain; it reads AEYNQQIILT…AIMDKKVDQM (63 aa). Positions 37 to 56 form a DNA-binding region, H-T-H motif; sequence KMSDIAKISGVGVGTLYRHF.

The sequence is that of HTH-type transcriptional regulator SAR0097 from Staphylococcus aureus (strain MRSA252).